We begin with the raw amino-acid sequence, 3132 residues long: Toxin CdiA (3132 aa).

A signal peptide (signal) is located at residues 1 to 32; sequence MHQPPVRFTYRLLSYLVSAIIAGQPLLPAVGA. Residues 36 to 322 form a two-partner system transport domain (TPS) region; sequence PQNGAGMDKA…AGGNLSVTGT (287 aa). The segment at 351–1378 is FHA-1; it reads GELTAGQNAM…ITMNTAHLLN (1028 aa). The receptor-binding domain (RBD) stretch occupies residues 1379-1635; sequence SWDAISASHE…LSLSGASVSS (257 aa). The tract at residues 1636–1820 is YP domain; it reads YPLPSGNNGY…LSPEDITLHN (185 aa). The segment at 1821-1859 is periplasmic FHA-1 repeat (pFR); that stretch reads GSVISGNNVQLAGGNITNSGSSINAQNDLLLDRTGSIDN. Residues 1930 to 2526 are FHA-2; that stretch reads RATDSLFMGA…QDSDRYDSRQ (597 aa). Disordered stretches follow at residues 2195 to 2228 and 2456 to 2497; these read TGTG…STIG and AGIN…SGAQ. Polar residues-rich tracts occupy residues 2217–2228 and 2483–2497; these read GTTQSQSASTIG and VSLT…SGAQ. Residues 2862 to 2904 are pre-toxin (PT) domain; that stretch reads DNLSEQERQQISMLATIASGIAGGLVGNSTSAAGTGAQAGRNS. A VENN CT cleavage motif motif is present at residues 2905 to 2908; the sequence is VENN. The tract at residues 2909–3121 is C-terminal effector domain (CT); the sequence is AMSGLEGFGT…IGTVTDYQIE (213 aa).

The protein in the N-terminal section; belongs to the CdiA toxin family. Probably interacts with cognate immunity protein CdiI. In terms of processing, expressed as 303 kDa protein which can be processed to 284 kDa and 195 kDa forms.

The protein localises to the secreted. The protein resides in the target cell. It localises to the target cell cytoplasm. Functionally, toxic component of a toxin-immunity protein module, which functions as a cellular contact-dependent growth inhibition (CDI) system. CDI modules allow bacteria to communicate with and inhibit the growth of closely related neighboring bacteria (target cell counts decrease 1000- to 10(5)-fold) in a contact-dependent fashion. Inhibitory cells must be in logarithmic (not stationary) phase to inhibit growth of their targets, but protein synthesis is not necessary. The presence of P or S but not type 1 pili protects the target cells against growth inhibition for this CDI. BamA on the outer membrane of target cells acts as a receptor for CdiA, while target cell multidrug efflux pump AcrB facilitates its transport into the cytoplasm. Outer membrane receptor function is dependent on extracellular loops of BamA. Cells undergoing CDI show a 2- to 5-fold reversible decrease in aerobic respiration, proton motive force and steady-state ATP levels, suggesting this CT module is an ionophore that disrupts the target cell's inner cell membrane. Growth recovery requires an energy source. Cells expressing this protein in the absence of CdiI initially form filaments, some of which contain multiple nucleoids, while others are devoid of nucleoids. CDI cells induce the phage shock response, but pspA is not required for recovery from CDI. CDI is neutralized by its cognate immunity protein CdiI, but not by non-cognate CdiI from other bacteria with different CDI systems. Plays a role in biofilm formation, a region N-terminal to residue 644 is implicated in this receptor-independent cell adhesion. The CdiA protein is thought to be exported from the cell through the central lumen of CdiB, the other half of its two-partner system (TPS). The TPS domain probably remains associated with CdiB while the FHA-1 domain forms an extended filament (33 nm long) with the receptor-binding domain (RBD) at its extremity; in the secretion arrested state the C-terminus of the RBD and YP domains form a hairpin-like structure as the FHA-2, PT and CT domains are periplasmic. The YP domain is probably responsible for this arrest at the point where it re-enters the host cell periplasm. Upon binding to a target cell outer membrane receptor (BamA for this CDI) a signal is transmitted to activate secretion. The filament becomes about 5 nm longer, the rest of CdiA is secreted and the FHA-2 domain becomes stably associated with the target cell's outer membrane where it facilitates entry of the toxic CT domain into the target cell periplasm. From there the toxic CT domain is cleaved and gains access to the target cell cytoplasm via an inner membrane protein (multidrug efflux pump AcrB for this CDI). This Escherichia coli protein is Toxin CdiA.